The primary structure comprises 154 residues: 6,7-dimethyl-8-ribityllumazine synthase (154 aa).

5-amino-6-(D-ribitylamino)uracil-binding positions include Phe23, 57–59 (AFE), and 81–83 (AVI). Position 86–87 (86–87 (AT)) interacts with (2S)-2-hydroxy-3-oxobutyl phosphate. His89 functions as the Proton donor in the catalytic mechanism. Residue Phe114 participates in 5-amino-6-(D-ribitylamino)uracil binding. Arg128 contacts (2S)-2-hydroxy-3-oxobutyl phosphate.

The protein belongs to the DMRL synthase family.

The catalysed reaction is (2S)-2-hydroxy-3-oxobutyl phosphate + 5-amino-6-(D-ribitylamino)uracil = 6,7-dimethyl-8-(1-D-ribityl)lumazine + phosphate + 2 H2O + H(+). The protein operates within cofactor biosynthesis; riboflavin biosynthesis; riboflavin from 2-hydroxy-3-oxobutyl phosphate and 5-amino-6-(D-ribitylamino)uracil: step 1/2. Its function is as follows. Catalyzes the formation of 6,7-dimethyl-8-ribityllumazine by condensation of 5-amino-6-(D-ribitylamino)uracil with 3,4-dihydroxy-2-butanone 4-phosphate. This is the penultimate step in the biosynthesis of riboflavin. In Syntrophus aciditrophicus (strain SB), this protein is 6,7-dimethyl-8-ribityllumazine synthase.